The following is a 189-amino-acid chain: GTPase HRas (189 aa).

10 to 17 (GAKGVGKS) is a binding site for GTP. An Effector region motif is present at residues 32–40 (YDPTIEDSY). Residues 57-61 (DTAGQ) and 116-119 (NKCD) each bind GTP. 2 S-palmitoyl cysteine; by host lipidation sites follow: Cys181 and Cys184. The residue at position 186 (Cys186) is a Cysteine methyl ester; by host. Residue Cys186 is the site of S-farnesyl cysteine; by host attachment. Residues 187–189 (VLS) constitute a propeptide, removed in mature form.

Belongs to the small GTPase superfamily. Ras family.

The protein resides in the host cell membrane. The catalysed reaction is GTP + H2O = GDP + phosphate + H(+). With respect to regulation, alternates between an inactive form bound to GDP and an active form bound to GTP. Activated by a guanine nucleotide-exchange factor (GEF) and inactivated by a GTPase-activating protein (GAP). The sequence is that of GTPase HRas (H-RAS) from Moloney murine sarcoma virus (MoMSV).